Here is a 172-residue protein sequence, read N- to C-terminus: Large ribosomal subunit protein uL10 (172 aa).

It belongs to the universal ribosomal protein uL10 family. As to quaternary structure, part of the ribosomal stalk of the 50S ribosomal subunit. The N-terminus interacts with L11 and the large rRNA to form the base of the stalk. The C-terminus forms an elongated spine to which L12 dimers bind in a sequential fashion forming a multimeric L10(L12)X complex.

Its function is as follows. Forms part of the ribosomal stalk, playing a central role in the interaction of the ribosome with GTP-bound translation factors. The sequence is that of Large ribosomal subunit protein uL10 from Prosthecochloris aestuarii (strain DSM 271 / SK 413).